The primary structure comprises 469 residues: CBL-interacting serine/threonine-protein kinase 16 (469 aa).

A Protein kinase domain is found at 15–278 (YNIGRLLGTG…MSEIKMIPWF (264 aa)). Residues 21–29 (LGTGNFAKV) and lysine 44 contribute to the ATP site. Catalysis depends on aspartate 139, which acts as the Proton acceptor. The interval 157–193 (DFGLSALMMPEGLGGRRGSSDDLLHTRCGTPAYVAPE) is activation loop. Serine 161 is modified (phosphoserine). Threonine 182 is modified (phosphothreonine). The disordered stretch occupies residues 290-320 (IDETIPSPPEPPTKKKKKDLNEKEDDGASPR). An NAF domain is found at 317-342 (ASPRSFNAFQFITSMSSGFDLSNLFE). The interval 346–376 (KPKRMFTSKFPAKSVKERLETAAREMDMRVK) is PPI. The interval 447–469 (DDEDDVTTNDNVDTNDNKINNVS) is disordered. Low complexity predominate over residues 454-469 (TNDNVDTNDNKINNVS).

This sequence belongs to the protein kinase superfamily. CAMK Ser/Thr protein kinase family. SNF1 subfamily. In terms of assembly, part of a K(+)-channel calcium-sensing kinase/phosphatase complex composed by a calcium sensor CBL (CBL1, CBL2, CBL3 or CBL9), a kinase CIPK (CIPK6, CIPK16 or CIPK23), a phosphatase PP2C (AIP1) and a K(+)-channel (AKT1). Interacts with AKT1, CBL1, CBL2, CBL3 and CBL9. The cofactor is Mn(2+).

It catalyses the reaction L-seryl-[protein] + ATP = O-phospho-L-seryl-[protein] + ADP + H(+). The enzyme catalyses L-threonyl-[protein] + ATP = O-phospho-L-threonyl-[protein] + ADP + H(+). Functionally, CIPK serine-threonine protein kinases interact with CBL proteins. Binding of a CBL protein to the regulatory NAF domain of CIPK protein lead to the activation of the kinase in a calcium-dependent manner. Downstream of CBL1, CBL2, CBL3 and CBL9, regulates by phosphorylation the K(+) conductance and uptake of AKT1. This chain is CBL-interacting serine/threonine-protein kinase 16 (CIPK16), found in Arabidopsis thaliana (Mouse-ear cress).